We begin with the raw amino-acid sequence, 243 residues long: 3-deoxy-manno-octulosonate cytidylyltransferase (243 aa).

The protein belongs to the KdsB family.

The protein localises to the cytoplasm. It carries out the reaction 3-deoxy-alpha-D-manno-oct-2-ulosonate + CTP = CMP-3-deoxy-beta-D-manno-octulosonate + diphosphate. The protein operates within nucleotide-sugar biosynthesis; CMP-3-deoxy-D-manno-octulosonate biosynthesis; CMP-3-deoxy-D-manno-octulosonate from 3-deoxy-D-manno-octulosonate and CTP: step 1/1. It functions in the pathway bacterial outer membrane biogenesis; lipopolysaccharide biosynthesis. Its function is as follows. Activates KDO (a required 8-carbon sugar) for incorporation into bacterial lipopolysaccharide in Gram-negative bacteria. This chain is 3-deoxy-manno-octulosonate cytidylyltransferase, found in Helicobacter pylori (strain P12).